The primary structure comprises 370 residues: Uroporphyrinogen decarboxylase (370 aa).

Substrate contacts are provided by residues R29–R33, D79, Y155, S210, and H342.

Belongs to the uroporphyrinogen decarboxylase family. In terms of assembly, homodimer.

It is found in the cytoplasm. It carries out the reaction uroporphyrinogen III + 4 H(+) = coproporphyrinogen III + 4 CO2. It functions in the pathway porphyrin-containing compound metabolism; protoporphyrin-IX biosynthesis; coproporphyrinogen-III from 5-aminolevulinate: step 4/4. Catalyzes the decarboxylation of four acetate groups of uroporphyrinogen-III to yield coproporphyrinogen-III. The protein is Uroporphyrinogen decarboxylase of Acidovorax ebreus (strain TPSY) (Diaphorobacter sp. (strain TPSY)).